Consider the following 224-residue polypeptide: Probable C-&gt;U-editing enzyme APOBEC-2 (224 aa).

The segment at 1–25 (MAQKEEAAAATEAASQNGEDLENLD) is disordered. Zn(2+)-binding residues include Glu60 and His98. One can recognise a CMP/dCMP-type deaminase domain in the interval 64–169 (GRNKTFLCYV…LEIQDALKKL (106 aa)). The active-site Proton donor is the Glu100. Cys128 and Cys131 together coordinate Zn(2+).

It belongs to the cytidine and deoxycytidylate deaminase family. As to quaternary structure, homotetramer. Requires Zn(2+) as cofactor.

It carries out the reaction cytidine(6666) in apoB mRNA + H2O + H(+) = uridine(6666) in apoB mRNA + NH4(+). In terms of biological role, probable C to U editing enzyme whose physiological substrate is not yet known. Does not display detectable apoB mRNA editing. Has a low intrinsic cytidine deaminase activity. May play a role in the epigenetic regulation of gene expression through the process of active DNA demethylation. The protein is Probable C-&gt;U-editing enzyme APOBEC-2 (APOBEC2) of Pongo pygmaeus (Bornean orangutan).